We begin with the raw amino-acid sequence, 184 residues long: uncharacterized protein (184 aa).

A helical membrane pass occupies residues 35–55 (LSFLIYILYTFSISGLSTFVI).

Its subcellular location is the membrane. This is an uncharacterized protein from Schizosaccharomyces pombe (strain 972 / ATCC 24843) (Fission yeast).